The primary structure comprises 147 residues: Peptide methionine sulfoxide reductase MsrB (147 aa).

Residues Met1–Phe11 are compositionally biased toward basic and acidic residues. Positions Met1 to Gln25 are disordered. Residues Asp23–Ser145 form the MsrB domain. Residues Cys62, Cys65, Cys111, and Cys114 each contribute to the Zn(2+) site. The active-site Nucleophile is the Cys134.

Belongs to the MsrB Met sulfoxide reductase family. It depends on Zn(2+) as a cofactor.

The enzyme catalyses L-methionyl-[protein] + [thioredoxin]-disulfide + H2O = L-methionyl-(R)-S-oxide-[protein] + [thioredoxin]-dithiol. The polypeptide is Peptide methionine sulfoxide reductase MsrB (Vibrio parahaemolyticus serotype O3:K6 (strain RIMD 2210633)).